The chain runs to 439 residues: Glutamate--tRNA ligase 2 (439 aa).

Residues 6–16 (PSPTGDMHIGN) carry the 'HIGH' region motif. Residues 232–236 (KMSKR) carry the 'KMSKS' region motif. Lysine 235 serves as a coordination point for ATP.

This sequence belongs to the class-I aminoacyl-tRNA synthetase family. Glutamate--tRNA ligase type 1 subfamily. As to quaternary structure, monomer.

The protein localises to the cytoplasm. The catalysed reaction is tRNA(Glu) + L-glutamate + ATP = L-glutamyl-tRNA(Glu) + AMP + diphosphate. In terms of biological role, catalyzes the attachment of glutamate to tRNA(Glu) in a two-step reaction: glutamate is first activated by ATP to form Glu-AMP and then transferred to the acceptor end of tRNA(Glu). The sequence is that of Glutamate--tRNA ligase 2 from Helicobacter pylori (strain P12).